A 324-amino-acid polypeptide reads, in one-letter code: Acetaldehyde dehydrogenase 1 (324 aa).

18 to 21 (SGNI) is a binding site for NAD(+). The active-site Acyl-thioester intermediate is the Cys-136. Residues 167 to 175 (SAGPGTRAN) and Asn-297 each bind NAD(+).

The protein belongs to the acetaldehyde dehydrogenase family.

The catalysed reaction is acetaldehyde + NAD(+) + CoA = acetyl-CoA + NADH + H(+). This chain is Acetaldehyde dehydrogenase 1, found in Parafrankia sp. (strain EAN1pec).